The following is a 365-amino-acid chain: BTB/POZ and TAZ domain-containing protein 1 (365 aa).

A BTB domain is found at 25 to 96 (TDVEIITSGR…LYSPSVTENE (72 aa)). A Nuclear localization signal motif is present at residues 193–202 (RKKRRRRHRR). The segment at 205 to 304 (NLYLQLSEAM…SESCRVPLCR (100 aa)) adopts a TAZ-type zinc-finger fold. Residues 315–338 (KMVEDTKWKVLVRRVASAKAMSSL) are caM-binding.

In terms of assembly, interacts with CUL3A. Interacts with GTE9/BET9 and GTE11/BET10 through the BTB domain. Preferentially expressed in young leaves, roots and stems.

Its subcellular location is the nucleus. The protein localises to the cytoplasm. It participates in protein modification; protein ubiquitination. Functionally, may act as a substrate-specific adapter of an E3 ubiquitin-protein ligase complex (CUL3-RBX1-BTB) which mediates the ubiquitination and subsequent proteasomal degradation of target proteins. Also targeted for degradation by the 26S proteasome pathway. May be involved in gametophyte development. In Arabidopsis thaliana (Mouse-ear cress), this protein is BTB/POZ and TAZ domain-containing protein 1 (BT1).